A 377-amino-acid polypeptide reads, in one-letter code: uncharacterized protein (377 aa).

32–39 (GPINSGKT) serves as a coordination point for ATP.

It belongs to the archaeal ATPase family.

This is an uncharacterized protein from Methanocaldococcus jannaschii (strain ATCC 43067 / DSM 2661 / JAL-1 / JCM 10045 / NBRC 100440) (Methanococcus jannaschii).